A 286-amino-acid chain; its full sequence is 4-hydroxybenzoate octaprenyltransferase (286 aa).

The next 9 membrane-spanning stretches (helical) occupy residues 19 to 39 (AGWL…SHGF), 42 to 62 (WHLL…GCCV), 92 to 112 (ALVL…TTNA), 115 to 135 (IAWS…KRYV), 137 to 157 (MPQA…FAAV), 161 to 181 (VPLL…AYDT), 206 to 226 (FDVA…ALAL), 233 to 253 (AIYW…GWLI), and 264 to 284 (AFRL…LSYL).

This sequence belongs to the UbiA prenyltransferase family. Mg(2+) is required as a cofactor.

It localises to the cell inner membrane. The enzyme catalyses all-trans-octaprenyl diphosphate + 4-hydroxybenzoate = 4-hydroxy-3-(all-trans-octaprenyl)benzoate + diphosphate. It participates in cofactor biosynthesis; ubiquinone biosynthesis. Catalyzes the prenylation of para-hydroxybenzoate (PHB) with an all-trans polyprenyl group. Mediates the second step in the final reaction sequence of ubiquinone-8 (UQ-8) biosynthesis, which is the condensation of the polyisoprenoid side chain with PHB, generating the first membrane-bound Q intermediate 3-octaprenyl-4-hydroxybenzoate. This Polaromonas sp. (strain JS666 / ATCC BAA-500) protein is 4-hydroxybenzoate octaprenyltransferase.